We begin with the raw amino-acid sequence, 382 residues long: uncharacterized protein (382 aa).

This is an uncharacterized protein from Methanocaldococcus jannaschii (strain ATCC 43067 / DSM 2661 / JAL-1 / JCM 10045 / NBRC 100440) (Methanococcus jannaschii).